We begin with the raw amino-acid sequence, 678 residues long: DNA ligase (678 aa).

NAD(+) contacts are provided by residues 36–40 (DVVYD), 85–86 (SL), and Glu117. The active-site N6-AMP-lysine intermediate is Lys119. NAD(+) contacts are provided by Arg140, Glu177, Lys294, and Lys318. Cys412, Cys415, Cys430, and Cys435 together coordinate Zn(2+). Positions 598–678 (ISSTPLAGKT…QLLKMINPQE (81 aa)) constitute a BRCT domain.

It belongs to the NAD-dependent DNA ligase family. LigA subfamily. Mg(2+) is required as a cofactor. The cofactor is Mn(2+).

It carries out the reaction NAD(+) + (deoxyribonucleotide)n-3'-hydroxyl + 5'-phospho-(deoxyribonucleotide)m = (deoxyribonucleotide)n+m + AMP + beta-nicotinamide D-nucleotide.. In terms of biological role, DNA ligase that catalyzes the formation of phosphodiester linkages between 5'-phosphoryl and 3'-hydroxyl groups in double-stranded DNA using NAD as a coenzyme and as the energy source for the reaction. It is essential for DNA replication and repair of damaged DNA. In Gloeothece citriformis (strain PCC 7424) (Cyanothece sp. (strain PCC 7424)), this protein is DNA ligase.